The following is a 305-amino-acid chain: Methionyl-tRNA formyltransferase (305 aa).

111–114 (SILP) is a (6S)-5,6,7,8-tetrahydrofolate binding site.

This sequence belongs to the Fmt family.

It carries out the reaction L-methionyl-tRNA(fMet) + (6R)-10-formyltetrahydrofolate = N-formyl-L-methionyl-tRNA(fMet) + (6S)-5,6,7,8-tetrahydrofolate + H(+). Attaches a formyl group to the free amino group of methionyl-tRNA(fMet). The formyl group appears to play a dual role in the initiator identity of N-formylmethionyl-tRNA by promoting its recognition by IF2 and preventing the misappropriation of this tRNA by the elongation apparatus. The sequence is that of Methionyl-tRNA formyltransferase from Wolinella succinogenes (strain ATCC 29543 / DSM 1740 / CCUG 13145 / JCM 31913 / LMG 7466 / NCTC 11488 / FDC 602W) (Vibrio succinogenes).